Here is a 212-residue protein sequence, read N- to C-terminus: Redox-sensing transcriptional repressor Rex (212 aa).

Positions 17–56 form a DNA-binding region, H-T-H motif; sequence LYYRIFKRFNTDGIEKASSKQIADALGIDSATVRRDFSYF. 91 to 96 lines the NAD(+) pocket; sequence GCGNIG.

It belongs to the transcriptional regulatory Rex family. In terms of assembly, homodimer.

The protein resides in the cytoplasm. In terms of biological role, modulates transcription in response to changes in cellular NADH/NAD(+) redox state. The sequence is that of Redox-sensing transcriptional repressor Rex from Streptococcus agalactiae serotype III (strain NEM316).